Here is a 150-residue protein sequence, read N- to C-terminus: Large ribosomal subunit protein uL15 (150 aa).

It belongs to the universal ribosomal protein uL15 family. Part of the 50S ribosomal subunit.

Its function is as follows. Binds to the 23S rRNA. The polypeptide is Large ribosomal subunit protein uL15 (Anaplasma marginale (strain Florida)).